Here is a 600-residue protein sequence, read N- to C-terminus: Elongation factor 4 (600 aa).

One can recognise a tr-type G domain in the interval 5–187 (KYIRNFSIIA…AIVNKLPPPK (183 aa)). Residues 17 to 22 (DHGKST) and 134 to 137 (NKLD) each bind GTP.

This sequence belongs to the TRAFAC class translation factor GTPase superfamily. Classic translation factor GTPase family. LepA subfamily.

Its subcellular location is the cell inner membrane. The enzyme catalyses GTP + H2O = GDP + phosphate + H(+). In terms of biological role, required for accurate and efficient protein synthesis under certain stress conditions. May act as a fidelity factor of the translation reaction, by catalyzing a one-codon backward translocation of tRNAs on improperly translocated ribosomes. Back-translocation proceeds from a post-translocation (POST) complex to a pre-translocation (PRE) complex, thus giving elongation factor G a second chance to translocate the tRNAs correctly. Binds to ribosomes in a GTP-dependent manner. This is Elongation factor 4 from Rickettsia conorii (strain ATCC VR-613 / Malish 7).